The following is a 520-amino-acid chain: MAYERFGIILQSEQYDEDIGNTKVNQKMNEGNHYDLHRKNAFDRIIHSESKKGDNVINYNIHENDKIKAADNIFSSKLKMNPNMSYEMNINCFKNIGYGENQETSKVLTNSLSNNDINTEESGVVDKNSPFLTLGTTILNSNGKSRRWEQKLVHIKTMEGEFSVTMWASGISDDEYSGSDQIVGASDLLKGKEEFGIDGFTSQQNKEYQKMESKFTNAQTLEMPHPISSVQIMDHLIKERGNLSQENNISERILSKTTLSFEEPILLPDSSSIELVNETAAMTINNHRTLSNHTGNTGDLHALPSSVPFRIGLHEGQVNDCLSTISQSTHQDNTDSTGCGEMNLSEVTVSYTNDKKIACPHKGCNKHFRDSSAMRKHLHTHGPRVHVCAECGKAFVESSKLKRHQLVHTGEKPFQCTFEGCGKRFSLDFNLRTHVRIHTGDRPFVCPFDACNKKFAQSTNLKSHILTHAKAKRNTSISGKSGCSNAESNSQSEDTSANYVKVELQDSVTENHVPFVVYAD.

4 consecutive C2H2-type zinc fingers follow at residues isoleucine 357–histidine 381, histidine 386–histidine 408, phenylalanine 414–histidine 438, and phenylalanine 444–histidine 468. Residues threonine 475–alanine 497 form a disordered region.

In terms of assembly, component of the Esc/E(z) complex, composed of Esc, E(z), Su(z)12, HDAC1/Rpd3 and Caf1-55. This complex is distinct from the PRC1 complex, which contains many other PcG proteins like Pc, Ph, Psc, Su(z)2. The two complexes however cooperate and interact together during the first 3 hours of development to establish PcG silencing. Component of the chromatin remodeling Ino80 complex. Interacts with Sfmbt to form a pho-repressive complex (PhoRC).

It localises to the nucleus. Its function is as follows. Polycomb group (PcG) protein that binds to the 5'-CNGCCATNNNNG-3' sequence found in the regulatory regions of many genes. PcG proteins act by forming multiprotein complexes, which are required to maintain the transcriptionally repressive state of homeotic genes throughout development. PcG proteins are not required to initiate repression, but to maintain it during later stages of development. They probably act via the methylation of histones, rendering chromatin heritably changed in its expressibility. Probably targets the Esc/E(z) complex to DNA. Necessary but not sufficient to recruit a functional PcG repressive complex that represses target genes, suggesting that the recruitment of the distinct PRC1 complex is also required to allow a subsequent repression. Functionally, proposed core component of the chromatin remodeling Ino80 complex which is involved in transcriptional regulation, DNA replication and probably DNA repair. This Drosophila melanogaster (Fruit fly) protein is Polycomb protein PHO (pho).